The following is a 161-amino-acid chain: Cyclic pyranopterin monophosphate synthase (161 aa).

Substrate contacts are provided by residues 73 to 75 (LCH) and 110 to 111 (ME). D125 is an active-site residue.

This sequence belongs to the MoaC family. In terms of assembly, homohexamer; trimer of dimers.

It carries out the reaction (8S)-3',8-cyclo-7,8-dihydroguanosine 5'-triphosphate = cyclic pyranopterin phosphate + diphosphate. Its pathway is cofactor biosynthesis; molybdopterin biosynthesis. In terms of biological role, catalyzes the conversion of (8S)-3',8-cyclo-7,8-dihydroguanosine 5'-triphosphate to cyclic pyranopterin monophosphate (cPMP). In Pseudomonas syringae pv. tomato (strain ATCC BAA-871 / DC3000), this protein is Cyclic pyranopterin monophosphate synthase.